The following is a 100-amino-acid chain: Coiled-coil domain-containing protein 167 (100 aa).

Positions 14–81 form a coiled coil; that stretch reads VASEIDRVEE…VLRGENRRNM (68 aa). A helical membrane pass occupies residues 82–99; it reads MLSVALLAISALFYYTFI.

It localises to the membrane. The polypeptide is Coiled-coil domain-containing protein 167 (ccdc167) (Danio rerio (Zebrafish)).